We begin with the raw amino-acid sequence, 118 residues long: NADH-ubiquinone oxidoreductase chain 3 (118 aa).

A run of 2 helical transmembrane segments spans residues 4-24 and 87-107; these read FAPI…PLGV and IDPF…IGSL.

The protein belongs to the complex I subunit 3 family.

It is found in the mitochondrion membrane. It catalyses the reaction a ubiquinone + NADH + 5 H(+)(in) = a ubiquinol + NAD(+) + 4 H(+)(out). Its function is as follows. Core subunit of the mitochondrial membrane respiratory chain NADH dehydrogenase (Complex I) that is believed to belong to the minimal assembly required for catalysis. Complex I functions in the transfer of electrons from NADH to the respiratory chain. The immediate electron acceptor for the enzyme is believed to be ubiquinone. This Panax ginseng (Korean ginseng) protein is NADH-ubiquinone oxidoreductase chain 3 (ND3).